The chain runs to 348 residues: Phosphate acyltransferase (348 aa).

It belongs to the PlsX family. In terms of assembly, homodimer. Probably interacts with PlsY.

The protein resides in the cytoplasm. The enzyme catalyses a fatty acyl-[ACP] + phosphate = an acyl phosphate + holo-[ACP]. It participates in lipid metabolism; phospholipid metabolism. Catalyzes the reversible formation of acyl-phosphate (acyl-PO(4)) from acyl-[acyl-carrier-protein] (acyl-ACP). This enzyme utilizes acyl-ACP as fatty acyl donor, but not acyl-CoA. This chain is Phosphate acyltransferase, found in Lactiplantibacillus plantarum (strain ATCC BAA-793 / NCIMB 8826 / WCFS1) (Lactobacillus plantarum).